The chain runs to 181 residues: MDTNIMGFARALVDLAHEEDKVHLFYDNLKVVFDLVKENQDLMSLMNSQVLSKNQKHEIIDVVFKDHLTQTIVDFLKVVIDNREFFHIKSIIKKFFRMIEEEEHTIFINVVSAHELNDDQKAQLVEKLHKKFASQVKILYQTDPSLIAGIRIQSNDLLIDNSIDGKLKLLKHQLRTFSKEN.

The protein belongs to the ATPase delta chain family. As to quaternary structure, F-type ATPases have 2 components, F(1) - the catalytic core - and F(0) - the membrane proton channel. F(1) has five subunits: alpha(3), beta(3), gamma(1), delta(1), epsilon(1). F(0) has three main subunits: a(1), b(2) and c(10-14). The alpha and beta chains form an alternating ring which encloses part of the gamma chain. F(1) is attached to F(0) by a central stalk formed by the gamma and epsilon chains, while a peripheral stalk is formed by the delta and b chains.

Its subcellular location is the cell membrane. Functionally, f(1)F(0) ATP synthase produces ATP from ADP in the presence of a proton or sodium gradient. F-type ATPases consist of two structural domains, F(1) containing the extramembraneous catalytic core and F(0) containing the membrane proton channel, linked together by a central stalk and a peripheral stalk. During catalysis, ATP synthesis in the catalytic domain of F(1) is coupled via a rotary mechanism of the central stalk subunits to proton translocation. In terms of biological role, this protein is part of the stalk that links CF(0) to CF(1). It either transmits conformational changes from CF(0) to CF(1) or is implicated in proton conduction. The sequence is that of ATP synthase subunit delta from Mycoplasmoides gallisepticum (strain R(low / passage 15 / clone 2)) (Mycoplasma gallisepticum).